The sequence spans 209 residues: ATP phosphoribosyltransferase (209 aa).

This sequence belongs to the ATP phosphoribosyltransferase family. Short subfamily. As to quaternary structure, heteromultimer composed of HisG and HisZ subunits.

Its subcellular location is the cytoplasm. It carries out the reaction 1-(5-phospho-beta-D-ribosyl)-ATP + diphosphate = 5-phospho-alpha-D-ribose 1-diphosphate + ATP. The protein operates within amino-acid biosynthesis; L-histidine biosynthesis; L-histidine from 5-phospho-alpha-D-ribose 1-diphosphate: step 1/9. Its function is as follows. Catalyzes the condensation of ATP and 5-phosphoribose 1-diphosphate to form N'-(5'-phosphoribosyl)-ATP (PR-ATP). Has a crucial role in the pathway because the rate of histidine biosynthesis seems to be controlled primarily by regulation of HisG enzymatic activity. This chain is ATP phosphoribosyltransferase, found in Alkaliphilus metalliredigens (strain QYMF).